The primary structure comprises 369 residues: Alanine racemase (369 aa).

The active-site Proton acceptor; specific for D-alanine is lysine 35. Position 35 is an N6-(pyridoxal phosphate)lysine (lysine 35). Residue arginine 130 coordinates substrate. The active-site Proton acceptor; specific for L-alanine is tyrosine 257. Position 305 (methionine 305) interacts with substrate.

The protein belongs to the alanine racemase family. Pyridoxal 5'-phosphate is required as a cofactor.

The enzyme catalyses L-alanine = D-alanine. It participates in amino-acid biosynthesis; D-alanine biosynthesis; D-alanine from L-alanine: step 1/1. Catalyzes the interconversion of L-alanine and D-alanine. May also act on other amino acids. The protein is Alanine racemase (alr) of Paracidovorax citrulli (strain AAC00-1) (Acidovorax citrulli).